The sequence spans 204 residues: ATP synthase subunit b 2 (204 aa).

Residues 50 to 70 (IFWLAVTFGLLLFLMSKVALP) form a helical membrane-spanning segment.

Belongs to the ATPase B chain family. As to quaternary structure, F-type ATPases have 2 components, F(1) - the catalytic core - and F(0) - the membrane proton channel. F(1) has five subunits: alpha(3), beta(3), gamma(1), delta(1), epsilon(1). F(0) has three main subunits: a(1), b(2) and c(10-14). The alpha and beta chains form an alternating ring which encloses part of the gamma chain. F(1) is attached to F(0) by a central stalk formed by the gamma and epsilon chains, while a peripheral stalk is formed by the delta and b chains.

The protein localises to the cell inner membrane. Functionally, f(1)F(0) ATP synthase produces ATP from ADP in the presence of a proton or sodium gradient. F-type ATPases consist of two structural domains, F(1) containing the extramembraneous catalytic core and F(0) containing the membrane proton channel, linked together by a central stalk and a peripheral stalk. During catalysis, ATP synthesis in the catalytic domain of F(1) is coupled via a rotary mechanism of the central stalk subunits to proton translocation. In terms of biological role, component of the F(0) channel, it forms part of the peripheral stalk, linking F(1) to F(0). The b'-subunit is a diverged and duplicated form of b found in plants and photosynthetic bacteria. The protein is ATP synthase subunit b 2 (atpF2) of Rhodospirillum centenum (strain ATCC 51521 / SW).